The sequence spans 715 residues: ABC transporter F family member 3 (715 aa).

Threonine 2 bears the N-acetylthreonine mark. The tract at residues 96-118 is disordered; that stretch reads VRMNDGMDDGPVKKKKPEPVDGP. 2 ABC transporter domains span residues 175-436 and 504-713; these read IHMD…KNQQ and ISFS…LLQS. ATP is bound by residues 207–214 and 537–544; these read GRNGTGKT and GPNGIGKS.

Belongs to the ABC transporter superfamily. ABCF family. EF3 (TC 3.A.1.121) subfamily.

The polypeptide is ABC transporter F family member 3 (ABCF3) (Arabidopsis thaliana (Mouse-ear cress)).